Consider the following 149-residue polypeptide: D-aminoacyl-tRNA deacylase (149 aa).

Residues 137–138 carry the Gly-cisPro motif, important for rejection of L-amino acids motif; it reads GP.

This sequence belongs to the DTD family. As to quaternary structure, homodimer.

The protein localises to the cytoplasm. The enzyme catalyses glycyl-tRNA(Ala) + H2O = tRNA(Ala) + glycine + H(+). It catalyses the reaction a D-aminoacyl-tRNA + H2O = a tRNA + a D-alpha-amino acid + H(+). Its function is as follows. An aminoacyl-tRNA editing enzyme that deacylates mischarged D-aminoacyl-tRNAs. Also deacylates mischarged glycyl-tRNA(Ala), protecting cells against glycine mischarging by AlaRS. Acts via tRNA-based rather than protein-based catalysis; rejects L-amino acids rather than detecting D-amino acids in the active site. By recycling D-aminoacyl-tRNA to D-amino acids and free tRNA molecules, this enzyme counteracts the toxicity associated with the formation of D-aminoacyl-tRNA entities in vivo and helps enforce protein L-homochirality. In Thermoanaerobacter sp. (strain X514), this protein is D-aminoacyl-tRNA deacylase.